We begin with the raw amino-acid sequence, 126 residues long: Fluoride-specific ion channel FluC (126 aa).

The next 4 membrane-spanning stretches (helical) occupy residues 5–25 (LHFLAVGVGAAAGAWLRWLLG), 35–55 (WGTLAANLGGGYLIGLILGLI), 68–88 (ALVTGFLGGLTTFSTFSAEVV), and 99–119 (AAGYAVVSLAGSLCLTALGLA). Glycine 75 and threonine 78 together coordinate Na(+).

Belongs to the fluoride channel Fluc/FEX (TC 1.A.43) family.

It is found in the cell inner membrane. It carries out the reaction fluoride(in) = fluoride(out). With respect to regulation, na(+) is not transported, but it plays an essential structural role and its presence is essential for fluoride channel function. Functionally, fluoride-specific ion channel. Important for reducing fluoride concentration in the cell, thus reducing its toxicity. In Bordetella avium (strain 197N), this protein is Fluoride-specific ion channel FluC.